Here is a 279-residue protein sequence, read N- to C-terminus: MVIKAKSPAGFAEKYIIESIWNGRFPPGSILPAERELSELIGVTRTTLREVLQRLARDGWLTIQHGKPTKVNQFMETSGLHILDTLMTLDAENATSIVEDLLAARTNISPIFMRYAFKLNKESAERIMINVIESCEALVNAPSWDAFIAASPYAEKIQQHVKEDSEKDELKRQEILIAKTFNFYDYMLFQRLAFHSGNQIYGLIFNGLKKLYDRVGSYYFSNPQARELAMEFYRQLLAVCQSGEREHLPQVIRQYGIASGHIWNQMKMTLPSNFTEDDC.

Residues 6–74 (KSPAGFAEKY…HGKPTKVNQF (69 aa)) enclose the HTH gntR-type domain. A DNA-binding region (H-T-H motif) is located at residues 34–53 (ERELSELIGVTRTTLREVLQ).

Homodimer.

It localises to the cytoplasm. Its function is as follows. Multifunctional regulator of fatty acid metabolism. The protein is Fatty acid metabolism regulator protein of Vibrio cholerae serotype O1 (strain ATCC 39541 / Classical Ogawa 395 / O395).